The primary structure comprises 1052 residues: Suppressor of RPS4-RLD 1 (1052 aa).

The residue at position 2 (Ala2) is an N-acetylalanine. TPR repeat units lie at residues 39 to 72 (ILDI…EPFA) and 74 to 106 (QAFI…ALQQ). Residues 107 to 136 (TADVKQLLELEELLKDARREIDGILKSHAT) adopt a coiled-coil conformation. A disordered region spans residues 131–181 (LKSHATESPQETPAYHSEKSDEKSDKLDNHESGASSNGNSHESSSELGEQS). Over residues 146-161 (HSEKSDEKSDKLDNHE) the composition is skewed to basic and acidic residues. A compositionally biased stretch (low complexity) spans 162-181 (SGASSNGNSHESSSELGEQS). 9 TPR repeats span residues 297–330 (VDFR…EPTY), 331–364 (PEAL…NPAA), 365–398 (SEAW…EPNS), 400–432 (DVLH…EKDN), 433–466 (KSAY…DSNY), 468–500 (EAWL…DNRV), 502–534 (KAYH…ENTI), 535–567 (ECLY…ELDA), and 569–591 (EKFV…ASKV). The disordered stretch occupies residues 704-739 (STKGTTKNGKKNRRRERTNILSQNRGGAGCSSSSFS). A helical transmembrane segment spans residues 966-986 (GTAVTGFVVLLGLLLAANMEF).

In terms of assembly, multimer. Interacts with EDS1. Interacts with SNC1 and RPS4. Interacts (via TPR domain) with SGT1 (via TPR domain). Interacts with the TCP transcription factors TCP8, TCP14, TCP15, TCP20, TCP22 and TCP23. In terms of tissue distribution, ubiquitous. Not detected in very young flowers and older siliques.

Its subcellular location is the nucleus. It localises to the cytoplasm. It is found in the perinuclear region. The protein resides in the membrane. The protein localises to the microsome. In terms of biological role, negative regulator of effector-triggered immunity associated with the EDS1 resistance pathway. May localize its interactors to a microsomal membrane. May therefore negatively regulate RPS4 and SNC1 translocation to the nucleus. Contributes to the regulation of RPS2 and RPS4 protein levels and negatively regulates SNC1 stability. The polypeptide is Suppressor of RPS4-RLD 1 (Arabidopsis thaliana (Mouse-ear cress)).